The primary structure comprises 66 residues: MKYTELKDKSIKELEELLHAKKAELFELRVKLKNMQLSNPNEIKKARRNIARINTAINAYYSSSVE.

This sequence belongs to the universal ribosomal protein uL29 family.

In Helicobacter pylori (strain J99 / ATCC 700824) (Campylobacter pylori J99), this protein is Large ribosomal subunit protein uL29 (rpmC).